The following is a 309-amino-acid chain: Homoserine kinase (309 aa).

95–105 provides a ligand contact to ATP; the sequence is PQSRGLGSSAA.

The protein belongs to the GHMP kinase family. Homoserine kinase subfamily.

It is found in the cytoplasm. It catalyses the reaction L-homoserine + ATP = O-phospho-L-homoserine + ADP + H(+). The protein operates within amino-acid biosynthesis; L-threonine biosynthesis; L-threonine from L-aspartate: step 4/5. Its function is as follows. Catalyzes the ATP-dependent phosphorylation of L-homoserine to L-homoserine phosphate. This is Homoserine kinase from Corynebacterium efficiens (strain DSM 44549 / YS-314 / AJ 12310 / JCM 11189 / NBRC 100395).